The following is a 426-amino-acid chain: PHD finger-containing protein 6 (426 aa).

A PHD-type zinc finger spans residues 9–59 (RSICETCGHQGWKNSLVTCSKCRIACEHCYCMRESSFETSIHFVCADCSMR). Zn(2+)-binding residues include C12, C15, C27, C30, H36, C39, C53, and C56. Disordered regions lie at residues 122–144 (TFRVPRPVSARPPMGLTKPTAGF) and 185–205 (RQASKAQAVGEGSKSKVGDGA).

Interacts directly with AIPP3/BDT1.

Together with AIPP3/BDT1, cooperates to form a BAH-PHD bivalent histone reader complex able to read histone H3 lysine 27 trimethylation (H3K27me3) histone marks in order to regulate transcription, especially to prevent early flowering; promotes AIPP3/BDT1 binding to H3K27me3. In Arabidopsis thaliana (Mouse-ear cress), this protein is PHD finger-containing protein 6.